We begin with the raw amino-acid sequence, 305 residues long: Translation initiation factor eIF2B subunit alpha (305 aa).

Position 35 is an N6-acetyllysine (Lys35).

Belongs to the eIF-2B alpha/beta/delta subunits family. In terms of assembly, component of the translation initiation factor 2B (eIF2B) complex which is a heterodecamer of two sets of five different subunits: alpha, beta, gamma, delta and epsilon. Subunits alpha, beta and delta comprise a regulatory subcomplex and subunits epsilon and gamma comprise a catalytic subcomplex. Within the complex, the hexameric regulatory complex resides at the center, with the two heterodimeric catalytic subcomplexes bound on opposite sides.

It localises to the cytoplasm. The protein localises to the cytosol. Activated by the chemical integrated stress response (ISR) inhibitor ISRIB which stimulates guanine nucleotide exchange factor activity for both phosphorylated and unphosphorylated eIF2. In terms of biological role, acts as a component of the translation initiation factor 2B (eIF2B) complex, which catalyzes the exchange of GDP for GTP on eukaryotic initiation factor 2 (eIF2) gamma subunit. Its guanine nucleotide exchange factor activity is repressed when bound to eIF2 complex phosphorylated on the alpha subunit, thereby limiting the amount of methionyl-initiator methionine tRNA available to the ribosome and consequently global translation is repressed. The protein is Translation initiation factor eIF2B subunit alpha (EIF2B1) of Pongo abelii (Sumatran orangutan).